The chain runs to 136 residues: Histone H2A variant 1 (136 aa).

Positions 1–35 (MAGKGGKGLVAAKTMAANKDKDKDKKKPISRSARA) are disordered. The span at 18-27 (NKDKDKDKKK) shows a compositional bias: basic and acidic residues.

The protein belongs to the histone H2A family. In terms of assembly, the nucleosome is a histone octamer containing two molecules each of H2A, H2B, H3 and H4 assembled in one H3-H4 heterotetramer and two H2A-H2B heterodimers. The octamer wraps approximately 147 bp of DNA.

The protein localises to the nucleus. It localises to the chromosome. Its function is as follows. Variant histone H2A which may replace conventional H2A in a subset of nucleosomes. Nucleosomes wrap and compact DNA into chromatin, limiting DNA accessibility to the cellular machineries which require DNA as a template. Histones thereby play a central role in transcription regulation, DNA repair, DNA replication and chromosomal stability. DNA accessibility is regulated via a complex set of post-translational modifications of histones, also called histone code, and nucleosome remodeling. This is Histone H2A variant 1 (H2AV) from Arabidopsis thaliana (Mouse-ear cress).